Here is a 308-residue protein sequence, read N- to C-terminus: Quinolinate synthase (308 aa).

Iminosuccinate-binding residues include His21 and Ser38. Cys83 contributes to the [4Fe-4S] cluster binding site. Iminosuccinate is bound by residues Tyr109–Asn111 and Ser126. Residue Cys170 participates in [4Fe-4S] cluster binding. Residues His196–Glu198 and Thr213 contribute to the iminosuccinate site. Position 263 (Cys263) interacts with [4Fe-4S] cluster.

It belongs to the quinolinate synthase family. Type 2 subfamily. [4Fe-4S] cluster serves as cofactor.

It localises to the cytoplasm. The catalysed reaction is iminosuccinate + dihydroxyacetone phosphate = quinolinate + phosphate + 2 H2O + H(+). It functions in the pathway cofactor biosynthesis; NAD(+) biosynthesis; quinolinate from iminoaspartate: step 1/1. Functionally, catalyzes the condensation of iminoaspartate with dihydroxyacetone phosphate to form quinolinate. This chain is Quinolinate synthase, found in Sulfurisphaera tokodaii (strain DSM 16993 / JCM 10545 / NBRC 100140 / 7) (Sulfolobus tokodaii).